The chain runs to 97 residues: Aspartyl/glutamyl-tRNA(Asn/Gln) amidotransferase subunit C (97 aa).

This sequence belongs to the GatC family. In terms of assembly, heterotrimer of A, B and C subunits.

The catalysed reaction is L-glutamyl-tRNA(Gln) + L-glutamine + ATP + H2O = L-glutaminyl-tRNA(Gln) + L-glutamate + ADP + phosphate + H(+). It catalyses the reaction L-aspartyl-tRNA(Asn) + L-glutamine + ATP + H2O = L-asparaginyl-tRNA(Asn) + L-glutamate + ADP + phosphate + 2 H(+). Allows the formation of correctly charged Asn-tRNA(Asn) or Gln-tRNA(Gln) through the transamidation of misacylated Asp-tRNA(Asn) or Glu-tRNA(Gln) in organisms which lack either or both of asparaginyl-tRNA or glutaminyl-tRNA synthetases. The reaction takes place in the presence of glutamine and ATP through an activated phospho-Asp-tRNA(Asn) or phospho-Glu-tRNA(Gln). The polypeptide is Aspartyl/glutamyl-tRNA(Asn/Gln) amidotransferase subunit C (Parasynechococcus marenigrum (strain WH8102)).